A 349-amino-acid polypeptide reads, in one-letter code: UDP-N-acetylenolpyruvoylglucosamine reductase (349 aa).

One can recognise an FAD-binding PCMH-type domain in the interval 26–197; sequence FDARARVAAR…VAVTFRLPKA (172 aa). Arg173 is an active-site residue. Ser249 (proton donor) is an active-site residue. Glu345 is a catalytic residue.

It belongs to the MurB family. It depends on FAD as a cofactor.

It localises to the cytoplasm. The catalysed reaction is UDP-N-acetyl-alpha-D-muramate + NADP(+) = UDP-N-acetyl-3-O-(1-carboxyvinyl)-alpha-D-glucosamine + NADPH + H(+). It participates in cell wall biogenesis; peptidoglycan biosynthesis. Its function is as follows. Cell wall formation. The protein is UDP-N-acetylenolpyruvoylglucosamine reductase of Burkholderia pseudomallei (strain K96243).